We begin with the raw amino-acid sequence, 920 residues long: 2-oxoadipate dehydrogenase complex component E1 (920 aa).

N6-succinyllysine occurs at positions 183 and 188. The tract at residues 299-318 (GKTRGRQQSQEDGDYSPNGS) is disordered. Lys800 and Lys818 each carry N6-succinyllysine.

This sequence belongs to the alpha-ketoglutarate dehydrogenase family. In terms of assembly, the 2-oxoadipate dehydrogenase complex is composed of OADH (2-oxoadipate dehydrogenase; E1a), DLST (dihydrolipoamide succinyltransferase; E2) and DLD (dihydrolipoamide dehydrogenase; E3). E1a functional unit is a dimer. Requires thiamine diphosphate as cofactor.

It is found in the mitochondrion. The enzyme catalyses N(6)-[(R)-lipoyl]-L-lysyl-[protein] + 2-oxoadipate + H(+) = N(6)-[(R)-S(8)-glutaryldihydrolipoyl]-L-lysyl-[protein] + CO2. It functions in the pathway amino-acid degradation. In terms of biological role, 2-oxoadipate dehydrogenase (E1a) component of the 2-oxoadipate dehydrogenase complex (OADHC). Participates in the first step, rate limiting for the overall conversion of 2-oxoadipate (alpha-ketoadipate) to glutaryl-CoA and CO(2) catalyzed by the whole OADHC. Catalyzes the irreversible decarboxylation of 2-oxoadipate via the thiamine diphosphate (ThDP) cofactor and subsequent transfer of the decarboxylated acyl intermediate on an oxidized dihydrolipoyl group that is covalently amidated to the E2 enzyme (dihydrolipoyllysine-residue succinyltransferase or DLST). Can catalyze the decarboxylation of 2-oxoglutarate in vitro, but at a much lower rate than 2-oxoadipate. Responsible for the last step of L-lysine, L-hydroxylysine and L-tryptophan catabolism with the common product being 2-oxoadipate. In Rattus norvegicus (Rat), this protein is 2-oxoadipate dehydrogenase complex component E1 (Dhtkd1).